We begin with the raw amino-acid sequence, 363 residues long: Aminomethyltransferase (363 aa).

This sequence belongs to the GcvT family. In terms of assembly, the glycine cleavage system is composed of four proteins: P, T, L and H.

It catalyses the reaction N(6)-[(R)-S(8)-aminomethyldihydrolipoyl]-L-lysyl-[protein] + (6S)-5,6,7,8-tetrahydrofolate = N(6)-[(R)-dihydrolipoyl]-L-lysyl-[protein] + (6R)-5,10-methylene-5,6,7,8-tetrahydrofolate + NH4(+). The glycine cleavage system catalyzes the degradation of glycine. The sequence is that of Aminomethyltransferase from Staphylococcus aureus (strain N315).